A 359-amino-acid polypeptide reads, in one-letter code: UDP-N-acetylglucosamine--N-acetylmuramyl-(pentapeptide) pyrophosphoryl-undecaprenol N-acetylglucosamine transferase (359 aa).

UDP-N-acetyl-alpha-D-glucosamine is bound by residues 12–14, N124, R163, S191, I245, 264–269, and Q290; these read TGG and ALTVAE.

It belongs to the glycosyltransferase 28 family. MurG subfamily.

It is found in the cell inner membrane. The enzyme catalyses di-trans,octa-cis-undecaprenyl diphospho-N-acetyl-alpha-D-muramoyl-L-alanyl-D-glutamyl-meso-2,6-diaminopimeloyl-D-alanyl-D-alanine + UDP-N-acetyl-alpha-D-glucosamine = di-trans,octa-cis-undecaprenyl diphospho-[N-acetyl-alpha-D-glucosaminyl-(1-&gt;4)]-N-acetyl-alpha-D-muramoyl-L-alanyl-D-glutamyl-meso-2,6-diaminopimeloyl-D-alanyl-D-alanine + UDP + H(+). Its pathway is cell wall biogenesis; peptidoglycan biosynthesis. In terms of biological role, cell wall formation. Catalyzes the transfer of a GlcNAc subunit on undecaprenyl-pyrophosphoryl-MurNAc-pentapeptide (lipid intermediate I) to form undecaprenyl-pyrophosphoryl-MurNAc-(pentapeptide)GlcNAc (lipid intermediate II). The polypeptide is UDP-N-acetylglucosamine--N-acetylmuramyl-(pentapeptide) pyrophosphoryl-undecaprenol N-acetylglucosamine transferase (Nitrosococcus oceani (strain ATCC 19707 / BCRC 17464 / JCM 30415 / NCIMB 11848 / C-107)).